The following is a 929-amino-acid chain: MTTESGSDSESKPDQEAEPQEAAGPQGQAGAQPGPEPAGGNGSLNGEKQQPALEQFPEAAAHSTPVKREIGDKDRDFAAAAAKQLEYQQFEDDKLSQRSSSSKLSRSPLKIVKRPKSMQCKVTLLDGSEYGCDVDKRSRGQVLFDKVCEHLNLLEKDYFGLTYRDAENQKNWLDPAKEIKKQIRSGAWHFSFNVKFYPPDPAQLSEDITRYYLCLQLRDDIVSGRLPCSFVTLALLGSYTVQSELGDYDPDECGNDYISEFRFAPNHTKELEDKVIELHKSHRGMTPAEAEMHFLENAKKLSMYGVDLHHAKDSEGVEIMLGVCASGLLIYRDRLRINRFAWPKVLKISYKRNNFYIKIRPGEFEQFESTIGFKLPNHRAAKRLWKVCVEHHTFFRLLLPEAPPKKFLTLGSKFRYSGRTQAQTRRASALIDRPAPYFERSSSKRYTMSRSLDGASVSENHEIYMKDSVSAAEVGTGQYATTKGISQTNLITTVTPEKKAEEERVEEEDRRKKAEEATPVTALRHEGKTDSERTDTAADGETSATESDQEEDAEIKAQDLDKTQDELMKHQTNISELKRTFLETSTETALTNEWEKRLSTSPVRLAARQEDAPMIEPLVPEETKQSSGEKLMDGSEILSLLESARKPTEFIGGVSSTTQSWVQKLETKTEPVEAEVESTPHPQPLSTEKVLQETILVEERHVMSVHASGDASHTARDEVDAAESTPTDRRHTGKGKEGSSVTEAAKEQRGEEVDQSAPEQEQPATVSHEEEQASTIRTSEGLEQKSHFESSTVRVESTSVGSISPGGAKLEISTKEVPVVHTETKTITYESSQVDPGADLEPGVLMSAQTITSETTSTTTTTHITKTVKGGISETRIEKRIVITGDADIDHDQALAQAIKEAKEQHPDMSVTKVVVHKETEITPEDGED.

M1 carries the N-acetylmethionine modification. Positions 1 to 72 (MTTESGSDSE…STPVKREIGD (72 aa)) are disordered. The residue at position 2 (T2) is an N-acetylthreonine; in Band 4.1-like protein 3, N-terminally processed. A compositionally biased stretch (low complexity) spans 20–33 (QEAAGPQGQAGAQP). S96 bears the Phosphoserine mark. The FERM domain occupies 118–399 (MQCKVTLLDG…EHHTFFRLLL (282 aa)). Residues 402 to 528 (APPKKFLTLG…PVTALRHEGK (127 aa)) form a hydrophilic region. Residues S428, S451, and S486 each carry the phosphoserine modification. The tract at residues 490 to 554 (LITTVTPEKK…TESDQEEDAE (65 aa)) is disordered. At T495 the chain carries Phosphothreonine. The segment covering 496–516 (PEKKAEEERVEEEDRRKKAEE) has biased composition (basic and acidic residues). T518 carries the phosphothreonine modification. Over residues 523–536 (LRHEGKTDSERTDT) the composition is skewed to basic and acidic residues. Phosphoserine is present on residues H525 and S543. Residue T545 is modified to Phosphothreonine. Residue S547 is modified to Phosphoserine. A spectrin--actin-binding region spans residues 559-602 (DLDKTQDELMKHQTNISELKRTFLETSTETALTNEWEKRLSTSP). Disordered regions lie at residues 608-630 (RQED…SGEK), 665-689 (LETK…STEK), and 705-807 (VHAS…SPGG). T725 is subject to Phosphothreonine. The span at 726–737 (PTDRRHTGKGKE) shows a compositional bias: basic and acidic residues. The interval 777–929 (RTSEGLEQKS…TEITPEDGED (153 aa)) is C-terminal (CTD). The span at 789–802 (ESSTVRVESTSVGS) shows a compositional bias: low complexity. A phosphoserine mark is found at S802 and S804. T923 is subject to Phosphothreonine.

In terms of assembly, interacts (via FERM domain) with CADM1. Interacts (via FERM domain) with PRMT3; the interaction is direct and inhibits the protein-arginine N-methyltransferase activity of PRMT3. Interacts with PRMT5. Interacts with PRMT6. Has the complete spectrin--actin-binding (SAB) domain and fully interacts with spectrin and actin. Detected in brain (at protein level). Highest expression in brain, lower in testis, adrenal gland, heart and kidney. Also present in muscle and epithelial cells. Isoform 1 is expressed in brain, isoform 2 is expressed in heart and isoform 3 is mostly expressed in kidney but also in heart and brain. Isoform 6 seems to be most abundant in kidney while isoform 4 and isoform 5 are predominantly expressed in heart and brain.

It localises to the cytoplasm. It is found in the cytoskeleton. The protein resides in the cell membrane. The protein localises to the cell junction. Its function is as follows. Tumor suppressor that inhibits cell proliferation and promotes apoptosis. Modulates the activity of protein arginine N-methyltransferases, including PRMT3 and PRMT5. The chain is Band 4.1-like protein 3 from Mus musculus (Mouse).